We begin with the raw amino-acid sequence, 251 residues long: MVLLLLLVALLSPTGEAGKIIGGHEAKPHSRPYMAFLLFKTSGKSHICGGFLVREDFVLTAAHCLGSSINVTLGAHNIMERERTQQVIPVRRPIPHPDYNDETLANDIMLLKLTRKADITDKVSPINLPRSLAEVKPGMMCSVAGWGRLGVNMPSTDNLQEVDLEVQSEEKCIARFKNYIPFTQICAGDPSKRKNSFSGDSGGPLVCNGVAQGIVSYGRNDGTTPDVYTRISSFLSWIHSTMRRYKRQGSV.

An N-terminal signal peptide occupies residues 1-17 (MVLLLLLVALLSPTGEA). A propeptide spanning residues 18-19 (GK) is cleaved from the precursor. Residues 20–242 (IIGGHEAKPH…SFLSWIHSTM (223 aa)) form the Peptidase S1 domain. Cysteines 48 and 64 form a disulfide. The active-site Charge relay system is His-63. An N-linked (GlcNAc...) asparagine glycan is attached at Asn-70. The active-site Charge relay system is Asp-107. Disulfide bonds link Cys-141/Cys-207 and Cys-172/Cys-186. The active-site Charge relay system is Ser-201.

The protein belongs to the peptidase S1 family. In terms of assembly, monomer.

Protease which has both trypsin-like and chymotrypsin-like activities. Shows a preferential cleavage after Lys, Arg, Tyr, Phe, and Leu residues. The sequence is that of Duodenase-1 (BDMD1) from Bos taurus (Bovine).